A 394-amino-acid polypeptide reads, in one-letter code: NADH dehydrogenase [ubiquinone] iron-sulfur protein 2 (394 aa).

This sequence belongs to the complex I 49 kDa subunit family. Complex I is composed of at least 49 different subunits. This is a component of the iron-sulfur (IP) fragment of the enzyme.

Its subcellular location is the mitochondrion. The catalysed reaction is a ubiquinone + NADH + 5 H(+)(in) = a ubiquinol + NAD(+) + 4 H(+)(out). Core subunit of the mitochondrial membrane respiratory chain NADH dehydrogenase (Complex I) that is believed to belong to the minimal assembly required for catalysis. Complex I functions in the transfer of electrons from NADH to the respiratory chain. The immediate electron acceptor for the enzyme is believed to be ubiquinone. Component of the iron-sulfur (IP) fragment of the enzyme. This Arabidopsis thaliana (Mouse-ear cress) protein is NADH dehydrogenase [ubiquinone] iron-sulfur protein 2 (NAD7).